Reading from the N-terminus, the 151-residue chain is 6,7-dimethyl-8-ribityllumazine synthase (151 aa).

Residues F23, 55–57, and 79–81 each bind 5-amino-6-(D-ribitylamino)uracil; these read AYE and AVI. A (2S)-2-hydroxy-3-oxobutyl phosphate-binding site is contributed by 84 to 85; the sequence is AT. The Proton donor role is filled by H87. F111 is a 5-amino-6-(D-ribitylamino)uracil binding site. Position 125 (R125) interacts with (2S)-2-hydroxy-3-oxobutyl phosphate.

It belongs to the DMRL synthase family.

The enzyme catalyses (2S)-2-hydroxy-3-oxobutyl phosphate + 5-amino-6-(D-ribitylamino)uracil = 6,7-dimethyl-8-(1-D-ribityl)lumazine + phosphate + 2 H2O + H(+). It functions in the pathway cofactor biosynthesis; riboflavin biosynthesis; riboflavin from 2-hydroxy-3-oxobutyl phosphate and 5-amino-6-(D-ribitylamino)uracil: step 1/2. Its function is as follows. Catalyzes the formation of 6,7-dimethyl-8-ribityllumazine by condensation of 5-amino-6-(D-ribitylamino)uracil with 3,4-dihydroxy-2-butanone 4-phosphate. This is the penultimate step in the biosynthesis of riboflavin. The sequence is that of 6,7-dimethyl-8-ribityllumazine synthase from Leptospira interrogans serogroup Icterohaemorrhagiae serovar Lai (strain 56601).